A 103-amino-acid chain; its full sequence is UPF0145 protein pXO2-45/BXB0052/GBAA_pXO2_0052 (103 aa).

This sequence belongs to the UPF0145 family.

This is UPF0145 protein pXO2-45/BXB0052/GBAA_pXO2_0052 from Bacillus anthracis.